The sequence spans 441 residues: Proline--tRNA ligase (441 aa).

This sequence belongs to the class-II aminoacyl-tRNA synthetase family. ProS type 2 subfamily. As to quaternary structure, homodimer.

It is found in the cytoplasm. The enzyme catalyses tRNA(Pro) + L-proline + ATP = L-prolyl-tRNA(Pro) + AMP + diphosphate. Its function is as follows. Catalyzes the attachment of proline to tRNA(Pro) in a two-step reaction: proline is first activated by ATP to form Pro-AMP and then transferred to the acceptor end of tRNA(Pro). The sequence is that of Proline--tRNA ligase from Bartonella quintana (strain Toulouse) (Rochalimaea quintana).